The chain runs to 235 residues: Large ribosomal subunit protein uL1 (235 aa).

The protein belongs to the universal ribosomal protein uL1 family. As to quaternary structure, part of the 50S ribosomal subunit.

Functionally, binds directly to 23S rRNA. The L1 stalk is quite mobile in the ribosome, and is involved in E site tRNA release. Protein L1 is also a translational repressor protein, it controls the translation of the L11 operon by binding to its mRNA. The polypeptide is Large ribosomal subunit protein uL1 (Prochlorococcus marinus (strain MIT 9303)).